Consider the following 56-residue polypeptide: Large ribosomal subunit protein bL33 (56 aa).

The protein belongs to the bacterial ribosomal protein bL33 family.

The sequence is that of Large ribosomal subunit protein bL33 from Delftia acidovorans (strain DSM 14801 / SPH-1).